The following is a 120-amino-acid chain: Large ribosomal subunit protein bL17 (120 aa).

Belongs to the bacterial ribosomal protein bL17 family. In terms of assembly, part of the 50S ribosomal subunit. Contacts protein L32.

In Bacillus licheniformis (strain ATCC 14580 / DSM 13 / JCM 2505 / CCUG 7422 / NBRC 12200 / NCIMB 9375 / NCTC 10341 / NRRL NRS-1264 / Gibson 46), this protein is Large ribosomal subunit protein bL17.